Reading from the N-terminus, the 510-residue chain is ATP synthase subunit alpha (510 aa).

169-176 (GDRQTGKS) provides a ligand contact to ATP.

The protein belongs to the ATPase alpha/beta chains family. In terms of assembly, F-type ATPases have 2 components, CF(1) - the catalytic core - and CF(0) - the membrane proton channel. CF(1) has five subunits: alpha(3), beta(3), gamma(1), delta(1), epsilon(1). CF(0) has three main subunits: a(1), b(2) and c(9-12). The alpha and beta chains form an alternating ring which encloses part of the gamma chain. CF(1) is attached to CF(0) by a central stalk formed by the gamma and epsilon chains, while a peripheral stalk is formed by the delta and b chains.

It localises to the cell membrane. It catalyses the reaction ATP + H2O + 4 H(+)(in) = ADP + phosphate + 5 H(+)(out). Produces ATP from ADP in the presence of a proton gradient across the membrane. The alpha chain is a regulatory subunit. This is ATP synthase subunit alpha from Wigglesworthia glossinidia brevipalpis.